We begin with the raw amino-acid sequence, 243 residues long: Mannosyl-3-phosphoglycerate phosphatase (243 aa).

Catalysis depends on aspartate 8, which acts as the Nucleophile. Mg(2+)-binding residues include aspartate 8, aspartate 10, serine 169, and aspartate 204.

This sequence belongs to the HAD-like hydrolase superfamily. MPGP family. It depends on Mg(2+) as a cofactor.

The protein resides in the cytoplasm. The catalysed reaction is 2-O-(alpha-D-mannosyl)-3-phosphoglycerate + H2O = (2R)-2-O-(alpha-D-mannosyl)-glycerate + phosphate. It participates in carbohydrate biosynthesis; 2-(alpha-D-mannosyl)-D-glycerate biosynthesis; 2-(alpha-D-mannosyl)-D-glycerate from GDP-alpha-D-mannose (MPG route): step 2/2. Functionally, hydrolyzes mannosyl-3-phosphoglycerate (MPG) to form the osmolyte mannosylglycerate (MG). The enzyme is absolutely specific for MPG. The polypeptide is Mannosyl-3-phosphoglycerate phosphatase (Pyrococcus horikoshii (strain ATCC 700860 / DSM 12428 / JCM 9974 / NBRC 100139 / OT-3)).